Consider the following 387-residue polypeptide: Protein kinase gsk3 (387 aa).

In terms of domain architecture, Protein kinase spans 32 to 316 (YTSSKVVGSG…AAEAMCHPFF (285 aa)). Residues 38–46 (VGSGSFGVV) and K61 contribute to the ATP site. Residue D157 is the Proton acceptor of the active site. S191 carries the phosphoserine modification. A Phosphotyrosine; by autocatalysis modification is found at Y192. S335 carries the phosphoserine modification.

This sequence belongs to the protein kinase superfamily. CMGC Ser/Thr protein kinase family. GSK-3 subfamily. In terms of processing, autophosphorylated on tyrosine residues.

It is found in the cytoplasm. The protein resides in the nucleus. It carries out the reaction L-seryl-[protein] + ATP = O-phospho-L-seryl-[protein] + ADP + H(+). The enzyme catalyses L-threonyl-[protein] + ATP = O-phospho-L-threonyl-[protein] + ADP + H(+). Interacts with cdc14 which is thought to play a role in the initiation and completion of mitosis. Involved in the positive regulation of mis12. The sequence is that of Protein kinase gsk3 (gsk3) from Schizosaccharomyces pombe (strain 972 / ATCC 24843) (Fission yeast).